The primary structure comprises 476 residues: ATP synthase subunit beta, mitochondrial (476 aa).

156 to 163 (GAGVGKTV) contacts ATP.

In terms of assembly, F-type ATP synthases have 2 components, the catalytic core F(1) and the membrane-embedded component F(0), linked together by a central stalk and a peripheral stalk. The central stalk, also called rotor shaft, is often seen as part of F(1). The peripheral stalk is seen as part of F(0). F(0) contains the membrane channel next to the rotor. F-type ATP synthases form dimers but each monomer functions independently in ATP generation. The dimer consists of 18 different polypeptides: ATP1 (subunit alpha, part of F(1), 3 molecules per monomer), ATP2 (subunit beta, part of F(1), 3 molecules per monomer), ATP3 (subunit gamma, part of the central stalk), ATP4 (subunit b, part of the peripheral stalk), ATP5/OSCP (subunit 5/OSCP, part of the peripheral stalk), ATP6 (subunit a, part of the peripheral stalk), ATP7 (subunit d, part of the peripheral stalk), ATP8 (subunit 8, part of the peripheral stalk), OLI1 (subunit c, part of the rotor, 10 molecules per monomer), ATP14 (subunit h, part of the peripheral stalk), ATP15 (subunit epsilon, part of the central stalk), ATP16 (subunit delta, part of the central stalk), ATP17 (subunit f, part of the peripheral stalk), ATP18 (subunit i/j, part of the peripheral stalk). Dimer-specific subunits are ATP19 (subunit k, at interface between monomers), ATP20 (subunit g, at interface between monomers), TIM11 (subunit e, at interface between monomers). Also contains subunit L.

Its subcellular location is the mitochondrion inner membrane. It carries out the reaction ATP + H2O + 4 H(+)(in) = ADP + phosphate + 5 H(+)(out). Mitochondrial membrane ATP synthase (F(1)F(0) ATP synthase or Complex V) produces ATP from ADP in the presence of a proton gradient across the membrane which is generated by electron transport complexes of the respiratory chain. F-type ATP synthases consist of two structural domains, F(1) - containing the extramembraneous catalytic core, and F(0) - containing the membrane proton channel, linked together by a central stalk and a peripheral stalk. During catalysis, ATP synthesis in the catalytic domain of F(1) is coupled via a rotary mechanism of the central stalk subunits to proton translocation. Subunits alpha/ATP1 and beta/ATP2 form the catalytic core in F(1). Rotation of the central stalk against the surrounding alpha/ATP1(3)beta/ATP2(3) subunits leads to hydrolysis of ATP in three separate catalytic sites on the beta/ATP2 subunits. The sequence is that of ATP synthase subunit beta, mitochondrial from Pichia angusta (Yeast).